The primary structure comprises 669 residues: Cysteine-rich receptor-like protein kinase 34 (669 aa).

The signal sequence occupies residues 1-23 (MKLKISFLPTFLIFLISLDSVTA). Gnk2-homologous domains lie at 24–123 (QEIC…NVSF) and 133–246 (ETLY…LYPY). Topologically, residues 24–285 (QEICFSGFFK…SDRANTTIKG (262 aa)) are extracellular. N-linked (GlcNAc...) asparagine glycans are attached at residues Asn35, Asn52, Asn103, Asn120, Asn147, Asn172, Asn252, and Asn280. Residues 286 to 306 (IIVAIVVPIIVILVSLVVLLV) form a helical membrane-spanning segment. Over 307–669 (VCRRKKSYKT…DASITEFYPR (363 aa)) the chain is Cytoplasmic. The Protein kinase domain maps to 345–624 (FSDSNMIGRG…MMLTSSTTTL (280 aa)). ATP is bound by residues 351-359 (IGRGGFGEV) and Lys373. Tyr418 is modified (phosphotyrosine). Residue Asp470 is the Proton acceptor of the active site. Ser474 carries the phosphoserine modification. Position 510 is a phosphothreonine (Thr510). A Phosphotyrosine modification is found at Tyr518.

This sequence belongs to the protein kinase superfamily. Ser/Thr protein kinase family. CRK subfamily.

The protein resides in the membrane. It catalyses the reaction L-seryl-[protein] + ATP = O-phospho-L-seryl-[protein] + ADP + H(+). The catalysed reaction is L-threonyl-[protein] + ATP = O-phospho-L-threonyl-[protein] + ADP + H(+). This chain is Cysteine-rich receptor-like protein kinase 34, found in Arabidopsis thaliana (Mouse-ear cress).